The chain runs to 262 residues: Type III pantothenate kinase (262 aa).

6–13 (DVGNTNTV) contacts ATP. Residues Y101 and 108–111 (GADR) each bind substrate. The Proton acceptor role is filled by D110. D130 is a K(+) binding site. Position 133 (T133) interacts with ATP. Substrate is bound at residue T186.

The protein belongs to the type III pantothenate kinase family. Homodimer. It depends on NH4(+) as a cofactor. Requires K(+) as cofactor.

It localises to the cytoplasm. The catalysed reaction is (R)-pantothenate + ATP = (R)-4'-phosphopantothenate + ADP + H(+). Its pathway is cofactor biosynthesis; coenzyme A biosynthesis; CoA from (R)-pantothenate: step 1/5. Catalyzes the phosphorylation of pantothenate (Pan), the first step in CoA biosynthesis. The sequence is that of Type III pantothenate kinase from Desulforapulum autotrophicum (strain ATCC 43914 / DSM 3382 / VKM B-1955 / HRM2) (Desulfobacterium autotrophicum).